A 249-amino-acid chain; its full sequence is Expansin-A18 (249 aa).

Residues 1 to 21 (MGNIVLQLLAILALCIAPARS) form the signal peptide. The Expansin-like EG45 domain occupies 41–154 (GGACGYGNLY…QQVKCWRSGG (114 aa)). Asn-116 is a glycosylation site (N-linked (GlcNAc...) asparagine). Positions 164-243 (YFELVLVTNM…GWSFGQTFST (80 aa)) constitute an Expansin-like CBD domain.

This sequence belongs to the expansin family. Expansin A subfamily. As to expression, expressed in roots.

It localises to the secreted. It is found in the cell wall. The protein resides in the membrane. May cause loosening and extension of plant cell walls by disrupting non-covalent bonding between cellulose microfibrils and matrix glucans. No enzymatic activity has been found. May be required for rapid internodal elongation in deepwater rice during submergence. The chain is Expansin-A18 (EXPA18) from Oryza sativa subsp. japonica (Rice).